We begin with the raw amino-acid sequence, 61 residues long: Small ribosomal subunit protein uS14 (61 aa).

Zn(2+)-binding residues include Cys24, Cys27, Cys40, and Cys43.

The protein belongs to the universal ribosomal protein uS14 family. Zinc-binding uS14 subfamily. As to quaternary structure, part of the 30S ribosomal subunit. Contacts proteins S3 and S10. It depends on Zn(2+) as a cofactor.

Binds 16S rRNA, required for the assembly of 30S particles and may also be responsible for determining the conformation of the 16S rRNA at the A site. The chain is Small ribosomal subunit protein uS14 from Campylobacter hominis (strain ATCC BAA-381 / DSM 21671 / CCUG 45161 / LMG 19568 / NCTC 13146 / CH001A).